The following is a 301-amino-acid chain: Phosphoribosylaminoimidazole-succinocarboxamide synthase (301 aa).

Belongs to the SAICAR synthetase family.

It catalyses the reaction 5-amino-1-(5-phospho-D-ribosyl)imidazole-4-carboxylate + L-aspartate + ATP = (2S)-2-[5-amino-1-(5-phospho-beta-D-ribosyl)imidazole-4-carboxamido]succinate + ADP + phosphate + 2 H(+). The protein operates within purine metabolism; IMP biosynthesis via de novo pathway; 5-amino-1-(5-phospho-D-ribosyl)imidazole-4-carboxamide from 5-amino-1-(5-phospho-D-ribosyl)imidazole-4-carboxylate: step 1/2. The sequence is that of Phosphoribosylaminoimidazole-succinocarboxamide synthase from Syntrophobacter fumaroxidans (strain DSM 10017 / MPOB).